A 102-amino-acid chain; its full sequence is uncharacterized protein (102 aa).

Positions 1–71 are disordered; sequence MKRMIRSHGR…GSANETSACT (71 aa). Topologically, residues 1–79 are extracellular; that stretch reads MKRMIRSHGR…CTRTDHQKAD (79 aa). Residues 56-71 show a composition bias toward polar residues; sequence SSGTRRGSANETSACT. An N-linked (GlcNAc...) asparagine; by host glycan is attached at N65. The helical transmembrane segment at 80 to 97 threads the bilayer; the sequence is IGLWFMFLVFGLCSWLAM. Residues 98–102 lie on the Cytoplasmic side of the membrane; the sequence is RYRAQ.

Belongs to the HHV-5 UL15A protein family.

Its subcellular location is the host membrane. This is an uncharacterized protein from Human cytomegalovirus (strain AD169) (HHV-5).